Consider the following 537-residue polypeptide: Trypsin-resistant surface T6 protein (537 aa).

Positions 1 to 22 (MLACLAILAVVGLGMTRVSALS) are cleaved as a signal peptide. The interval 310–330 (GNTYDNLDKKPDKGNGITSKE) is hydrophilic. Residues 504–508 (LPSTG) carry the LPXTG sorting signal motif. At threonine 507 the chain carries Pentaglycyl murein peptidoglycan amidated threonine. Positions 508–537 (GSIGTYLFKAIGSAAMIGAIGIYIVKRRKA) are cleaved as a propeptide — removed by sortase.

The protein resides in the secreted. Its subcellular location is the cell wall. This chain is Trypsin-resistant surface T6 protein (tee6), found in Streptococcus pyogenes serotype M6 (strain ATCC BAA-946 / MGAS10394).